Reading from the N-terminus, the 1254-residue chain is DNA polymerase gamma (1254 aa).

Over residues 1125-1137 the composition is skewed to basic and acidic residues; that stretch reads RKKENRIDDENKK. 2 disordered regions span residues 1125-1145 and 1202-1240; these read RKKE…KKNT and YKKK…TNRN. Residues 1208-1217 are compositionally biased toward polar residues; the sequence is QARTASSSPI. Residues 1219–1231 are compositionally biased toward basic residues; that stretch reads KTAKAVHSKKLPA.

It belongs to the DNA polymerase type-A family. Mg(2+) serves as cofactor.

The protein localises to the mitochondrion. The enzyme catalyses DNA(n) + a 2'-deoxyribonucleoside 5'-triphosphate = DNA(n+1) + diphosphate. Involved in the replication of mitochondrial DNA. The chain is DNA polymerase gamma (MIP1) from Saccharomyces cerevisiae (strain ATCC 204508 / S288c) (Baker's yeast).